A 269-amino-acid chain; its full sequence is tRNA (guanine-N(1)-)-methyltransferase (269 aa).

S-adenosyl-L-methionine is bound by residues Gly-115 and 139–144 (LGDYVL).

Belongs to the RNA methyltransferase TrmD family. In terms of assembly, homodimer.

Its subcellular location is the cytoplasm. The catalysed reaction is guanosine(37) in tRNA + S-adenosyl-L-methionine = N(1)-methylguanosine(37) in tRNA + S-adenosyl-L-homocysteine + H(+). Functionally, specifically methylates guanosine-37 in various tRNAs. The protein is tRNA (guanine-N(1)-)-methyltransferase of Pseudarthrobacter chlorophenolicus (strain ATCC 700700 / DSM 12829 / CIP 107037 / JCM 12360 / KCTC 9906 / NCIMB 13794 / A6) (Arthrobacter chlorophenolicus).